The primary structure comprises 230 residues: Cytochrome c oxidase subunit 2 (230 aa).

Residues 1–14 (MAHPAQLGFQDAAS) lie on the Mitochondrial intermembrane side of the membrane. The chain crosses the membrane as a helical span at residues 15-45 (PVMEELLCFHDHALMIVFLISTLVLYIIIAM). Over 46 to 59 (VSTKLTNKFILDSQ) the chain is Mitochondrial matrix. Residues 60–87 (EIEIVWTVLPAIILILIALPSLRILYLM) form a helical membrane-spanning segment. Topologically, residues 88–230 (DEINDPHVTI…NWSSAMLEDA (143 aa)) are mitochondrial intermembrane. Cu cation contacts are provided by His161, Cys196, Glu198, Cys200, His204, and Met207. Mg(2+) is bound at residue Glu198.

Belongs to the cytochrome c oxidase subunit 2 family. In terms of assembly, component of the cytochrome c oxidase (complex IV, CIV), a multisubunit enzyme composed of 14 subunits. The complex is composed of a catalytic core of 3 subunits MT-CO1, MT-CO2 and MT-CO3, encoded in the mitochondrial DNA, and 11 supernumerary subunits COX4I, COX5A, COX5B, COX6A, COX6B, COX6C, COX7A, COX7B, COX7C, COX8 and NDUFA4, which are encoded in the nuclear genome. The complex exists as a monomer or a dimer and forms supercomplexes (SCs) in the inner mitochondrial membrane with NADH-ubiquinone oxidoreductase (complex I, CI) and ubiquinol-cytochrome c oxidoreductase (cytochrome b-c1 complex, complex III, CIII), resulting in different assemblies (supercomplex SCI(1)III(2)IV(1) and megacomplex MCI(2)III(2)IV(2)). Found in a complex with TMEM177, COA6, COX18, COX20, SCO1 and SCO2. Interacts with TMEM177 in a COX20-dependent manner. Interacts with COX20. Interacts with COX16. Requires Cu cation as cofactor.

Its subcellular location is the mitochondrion inner membrane. The enzyme catalyses 4 Fe(II)-[cytochrome c] + O2 + 8 H(+)(in) = 4 Fe(III)-[cytochrome c] + 2 H2O + 4 H(+)(out). Component of the cytochrome c oxidase, the last enzyme in the mitochondrial electron transport chain which drives oxidative phosphorylation. The respiratory chain contains 3 multisubunit complexes succinate dehydrogenase (complex II, CII), ubiquinol-cytochrome c oxidoreductase (cytochrome b-c1 complex, complex III, CIII) and cytochrome c oxidase (complex IV, CIV), that cooperate to transfer electrons derived from NADH and succinate to molecular oxygen, creating an electrochemical gradient over the inner membrane that drives transmembrane transport and the ATP synthase. Cytochrome c oxidase is the component of the respiratory chain that catalyzes the reduction of oxygen to water. Electrons originating from reduced cytochrome c in the intermembrane space (IMS) are transferred via the dinuclear copper A center (CU(A)) of subunit 2 and heme A of subunit 1 to the active site in subunit 1, a binuclear center (BNC) formed by heme A3 and copper B (CU(B)). The BNC reduces molecular oxygen to 2 water molecules using 4 electrons from cytochrome c in the IMS and 4 protons from the mitochondrial matrix. In Danio rerio (Zebrafish), this protein is Cytochrome c oxidase subunit 2 (mt-co2).